A 73-amino-acid polypeptide reads, in one-letter code: Putative antitoxin VapB38 (73 aa).

Its function is as follows. Probable antitoxin component of a type II toxin-antitoxin (TA) system. Its putative cognate toxin is VapC38. The polypeptide is Putative antitoxin VapB38 (vapB38) (Mycobacterium tuberculosis (strain ATCC 25618 / H37Rv)).